An 865-amino-acid chain; its full sequence is Alanine--tRNA ligase (865 aa).

Zn(2+) contacts are provided by His554, His558, Cys656, and His660.

It belongs to the class-II aminoacyl-tRNA synthetase family. The cofactor is Zn(2+).

The protein localises to the cytoplasm. It catalyses the reaction tRNA(Ala) + L-alanine + ATP = L-alanyl-tRNA(Ala) + AMP + diphosphate. Functionally, catalyzes the attachment of alanine to tRNA(Ala) in a two-step reaction: alanine is first activated by ATP to form Ala-AMP and then transferred to the acceptor end of tRNA(Ala). Also edits incorrectly charged Ser-tRNA(Ala) and Gly-tRNA(Ala) via its editing domain. The chain is Alanine--tRNA ligase from Idiomarina loihiensis (strain ATCC BAA-735 / DSM 15497 / L2-TR).